A 281-amino-acid polypeptide reads, in one-letter code: MAVKLLKGEEIAEKKAEELKERIEKMGVSPRLVLLQVGNYSAATIYARAKIKRGKKIGADVVLEKYEDLTKQELVRRIEELSADKDVNGIMVENPLPKTIDYYDIVKSIPYYKDVDALSPYNQGSIAINREFLVPATAMAVVDILKYYGYEKTTATIINRSPVVGRPLSMMMLNRDYTVSICHSKTPDIRSIAKASKIIVVAVGRPGFLDDTYVTESSVVIDVGINYVQDKVIGDIDFDKVSEKVEAVTPVPGGVGPITATNILSNLVKAAEYQSNTNIGR.

Residues 159–161 (NRS), S184, and I225 contribute to the NADP(+) site.

The protein belongs to the tetrahydrofolate dehydrogenase/cyclohydrolase family. As to quaternary structure, homodimer.

The catalysed reaction is (6R)-5,10-methylene-5,6,7,8-tetrahydrofolate + NADP(+) = (6R)-5,10-methenyltetrahydrofolate + NADPH. It carries out the reaction (6R)-5,10-methenyltetrahydrofolate + H2O = (6R)-10-formyltetrahydrofolate + H(+). The protein operates within one-carbon metabolism; tetrahydrofolate interconversion. In terms of biological role, catalyzes the oxidation of 5,10-methylenetetrahydrofolate to 5,10-methenyltetrahydrofolate and then the hydrolysis of 5,10-methenyltetrahydrofolate to 10-formyltetrahydrofolate. This is Bifunctional protein FolD from Thermoplasma volcanium (strain ATCC 51530 / DSM 4299 / JCM 9571 / NBRC 15438 / GSS1).